Reading from the N-terminus, the 366-residue chain is Adenine DNA glycosylase (366 aa).

30–31 (WR) is a DNA binding site. E43 acts as the Proton donor/acceptor in catalysis. DNA contacts are provided by residues 48–49 (QT), 86–88 (LGY), Y126, and E188. A HhH domain is found at 105 to 133 (RYGGKVPDDPDEFSRLKGVGPYTVGAVLS). The [4Fe-4S] cluster site is built by C198, C205, C208, and C214. Position 308 (S308) interacts with DNA.

This sequence belongs to the Nth/MutY family. [4Fe-4S] cluster serves as cofactor.

The catalysed reaction is Hydrolyzes free adenine bases from 7,8-dihydro-8-oxoguanine:adenine mismatched double-stranded DNA, leaving an apurinic site.. Functionally, base excision repair (BER) glycosylase that initiates repair of A:oxoG to C:G by removing the inappropriately paired adenine base from the DNA backbone, generating an abasic site product. 8-oxoguanine (oxoG) is a genotoxic DNA lesion resulting from oxidation of guanine; this residue is misread by replicative DNA polymerases, that insert adenine instead of cytosine opposite the oxidized damaged base. Shows a powerful dicrimination of A versus C, since it does not cleave cytosine in oxoG:C pairs. May also be able to remove adenine from A:G mispairs, although this activity may not be physiologically relevant. The sequence is that of Adenine DNA glycosylase from Geobacillus stearothermophilus (Bacillus stearothermophilus).